The chain runs to 355 residues: tRNA uridine(34) hydroxylase (355 aa).

Residues 146–240 (DDPDTLFVDM…YARKAKEQGL (95 aa)) form the Rhodanese domain. Cys-200 acts as the Cysteine persulfide intermediate in catalysis. The disordered stretch occupies residues 333 to 355 (NKSKGLLQATMHIPSPEKSADEK).

The protein belongs to the TrhO family.

The catalysed reaction is uridine(34) in tRNA + AH2 + O2 = 5-hydroxyuridine(34) in tRNA + A + H2O. Its function is as follows. Catalyzes oxygen-dependent 5-hydroxyuridine (ho5U) modification at position 34 in tRNAs. In Yersinia pseudotuberculosis serotype O:1b (strain IP 31758), this protein is tRNA uridine(34) hydroxylase.